Consider the following 433-residue polypeptide: Glutamate-1-semialdehyde 2,1-aminomutase (433 aa).

At Lys273 the chain carries N6-(pyridoxal phosphate)lysine.

This sequence belongs to the class-III pyridoxal-phosphate-dependent aminotransferase family. HemL subfamily. As to quaternary structure, homodimer. Pyridoxal 5'-phosphate serves as cofactor.

It is found in the cytoplasm. The catalysed reaction is (S)-4-amino-5-oxopentanoate = 5-aminolevulinate. It functions in the pathway porphyrin-containing compound metabolism; protoporphyrin-IX biosynthesis; 5-aminolevulinate from L-glutamyl-tRNA(Glu): step 2/2. It participates in porphyrin-containing compound metabolism; chlorophyll biosynthesis. The chain is Glutamate-1-semialdehyde 2,1-aminomutase from Crocosphaera subtropica (strain ATCC 51142 / BH68) (Cyanothece sp. (strain ATCC 51142)).